A 278-amino-acid chain; its full sequence is ATP synthase subunit delta (278 aa).

Belongs to the ATPase delta chain family. As to quaternary structure, F-type ATPases have 2 components, F(1) - the catalytic core - and F(0) - the membrane proton channel. F(1) has five subunits: alpha(3), beta(3), gamma(1), delta(1), epsilon(1). F(0) has three main subunits: a(1), b(2) and c(10-14). The alpha and beta chains form an alternating ring which encloses part of the gamma chain. F(1) is attached to F(0) by a central stalk formed by the gamma and epsilon chains, while a peripheral stalk is formed by the delta and b chains.

The protein localises to the cell membrane. Its function is as follows. F(1)F(0) ATP synthase produces ATP from ADP in the presence of a proton or sodium gradient. F-type ATPases consist of two structural domains, F(1) containing the extramembraneous catalytic core and F(0) containing the membrane proton channel, linked together by a central stalk and a peripheral stalk. During catalysis, ATP synthesis in the catalytic domain of F(1) is coupled via a rotary mechanism of the central stalk subunits to proton translocation. Functionally, this protein is part of the stalk that links CF(0) to CF(1). It either transmits conformational changes from CF(0) to CF(1) or is implicated in proton conduction. This Bifidobacterium longum subsp. infantis (strain ATCC 15697 / DSM 20088 / JCM 1222 / NCTC 11817 / S12) protein is ATP synthase subunit delta.